The chain runs to 435 residues: Chaperone SurA (435 aa).

Positions 1–29 (MINKTLHTKHTLLGLLAMAVLMIPVWSQA) are cleaved as a signal peptide. PpiC domains follow at residues 180–281 (QEDF…KMID) and 290–390 (VTQY…RVDD).

It is found in the periplasm. The catalysed reaction is [protein]-peptidylproline (omega=180) = [protein]-peptidylproline (omega=0). Chaperone involved in the correct folding and assembly of outer membrane proteins. Recognizes specific patterns of aromatic residues and the orientation of their side chains, which are found more frequently in integral outer membrane proteins. May act in both early periplasmic and late outer membrane-associated steps of protein maturation. This is Chaperone SurA from Alcanivorax borkumensis (strain ATCC 700651 / DSM 11573 / NCIMB 13689 / SK2).